The chain runs to 371 residues: uncharacterized protein (371 aa).

A coiled-coil region spans residues 287–323 (EVVTALDRYRQHLRETRERLEEKQGKLLEELKGYESM).

This is an uncharacterized protein from Aspergillus fumigatus (strain ATCC MYA-4609 / CBS 101355 / FGSC A1100 / Af293) (Neosartorya fumigata).